The primary structure comprises 459 residues: MKNYTPKEIVEELDKYIVGQKEAKKSVAVALRNRYRRNLLSDDFKEEVTPKNIIMVGPTGVGKTEIARRIAKLVEAPFVKVEATKFTEVGYVGRDVDSMVRDLVEAAVRMVKEEKLKKVTEKAKKIAEDRLIDYIVGKRKKQAKNPFEMLFNYPAAEKSEETEEESMQYKREEIRQKLRNGELDNYVVEIEVTDTSTPMMEMYTNLGSEEMNINLQDIFADILPKKKKIKKVPVYEAKRILESEEAQNLIDMDEVIEEAIKRAENDGIIFIDEIDKIASSGYTAGPDVSREGVQRDILPIIEGCTVMTKYGPVKTDHILFIAAGAFNIAKVSDLIPELQGRFPVRVSLKPLTKEDFIRILKEPKNALTKQYQELLRTEGIEVKYTDEAIEAIAEVAYLINQQSEDIGARRLHTVMEKLFEELSFNAPDLKGQQIVITEEYVKEQLKDSLNKYEVNKYIL.

ATP contacts are provided by residues Val-18, 60-65, Asp-272, Glu-337, and Arg-409; that span reads GVGKTE.

This sequence belongs to the ClpX chaperone family. HslU subfamily. As to quaternary structure, a double ring-shaped homohexamer of HslV is capped on each side by a ring-shaped HslU homohexamer. The assembly of the HslU/HslV complex is dependent on binding of ATP.

It localises to the cytoplasm. ATPase subunit of a proteasome-like degradation complex; this subunit has chaperone activity. The binding of ATP and its subsequent hydrolysis by HslU are essential for unfolding of protein substrates subsequently hydrolyzed by HslV. HslU recognizes the N-terminal part of its protein substrates and unfolds these before they are guided to HslV for hydrolysis. In Thermoanaerobacter sp. (strain X514), this protein is ATP-dependent protease ATPase subunit HslU.